The sequence spans 563 residues: Choline transporter (563 aa).

A disordered region spans residues 1-25; that stretch reads MSIRNDNASGGYMQPDQSSNASMHK. At 1–57 the chain is on the extracellular side; sequence MSIRNDNASGGYMQPDQSSNASMHKRDLRVEEEIKPLDDMDSKGAVAADGEVHLRKS. Residues Asn-7 and Asn-20 are each glycosylated (N-linked (GlcNAc...) asparagine). 2 positions are modified to phosphoserine: Ser-22 and Ser-42. A helical transmembrane segment spans residues 58–78; sequence FSLWSILGVGFGLTNSWFGIS. The Cytoplasmic segment spans residues 79 to 87; sequence TSMVAGISS. Residues 88–108 form a helical membrane-spanning segment; it reads GGPMMIVYGIIIVALISICIG. Residues 109-182 are Extracellular-facing; it reads TSLGELSSAY…LTHPEFIPKR (74 aa). The chain crosses the membrane as a helical span at residues 183–203; the sequence is WHIFVCFELLHLFLMFFNCYG. The Cytoplasmic portion of the chain corresponds to 204 to 205; sequence KS. A helical transmembrane segment spans residues 206–226; sequence LPIISSSSLYISLLSFFTITI. Residues 227–255 lie on the Extracellular side of the membrane; it reads TVLACSHGKFNDAKFVFATFNNETGWKNG. Asn-248 carries an N-linked (GlcNAc...) asparagine glycan. Residues 256 to 276 form a helical membrane-spanning segment; sequence GIAFIVGLINPAWSFSCLDCA. Residues 277 to 293 are Cytoplasmic-facing; the sequence is THMAFEVEKPERVIPIA. A helical transmembrane segment spans residues 294–314; that stretch reads IMGTVAIGFVTSFCYVIAMFF. The Extracellular portion of the chain corresponds to 315–342; that stretch reads SIQDLDAVLSSTTGAPILDIYNQALGNK. Asn-341 carries an N-linked (GlcNAc...) asparagine glycan. Residues 343–363 form a helical membrane-spanning segment; sequence SGAIFLGCLILFTSFGCVIAC. Over 364–398 the chain is Cytoplasmic; that stretch reads HTWQARLCWSFARDNGLPLSRLWSQVNPHTGVPLN. Residues 399 to 417 traverse the membrane as a helical segment; sequence AHLMSCAWITLIGLLYLAS. The Extracellular portion of the chain corresponds to 418–426; it reads STAFQSLIT. The helical transmembrane segment at 427–445 threads the bilayer; sequence GCIAFLLLSYIIPVICLLA. The Cytoplasmic segment spans residues 446-465; that stretch reads KKRNIAHGPFWLGKFGFFSN. A helical membrane pass occupies residues 466–486; the sequence is IVLLGWTVFSVVFFSFPPVLP. Residues 487 to 491 are Extracellular-facing; that stretch reads VTKDN. The chain crosses the membrane as a helical span at residues 492–512; that stretch reads MNYVCVVIVGYTAYSILYWKY. Residues 513–563 lie on the Cytoplasmic side of the membrane; sequence KGKKEFHALEESENEQAEYSNNFDTIEDSREFSVAASDVELENEHVPWGKK.

Belongs to the amino acid-polyamine-organocation (APC) superfamily. Amino acid/choline transporter (ACT) (TC 2.A.3.4) family.

It is found in the membrane. It carries out the reaction choline(out) = choline(in). The catalysed reaction is ethanolamine(in) = ethanolamine(out). Its function is as follows. Sole choline transporter in yeast. Also transports ethanolamine. The sequence is that of Choline transporter (HNM1) from Saccharomyces cerevisiae (strain ATCC 204508 / S288c) (Baker's yeast).